The following is a 244-amino-acid chain: Orotidine 5'-phosphate decarboxylase (244 aa).

Substrate contacts are provided by residues Asp18, Lys43, 73–82 (DLKLADIGYI), Ser130, 182–192 (PGVGAQGGKPG), Gly206, and Arg207. Catalysis depends on Lys75, which acts as the Proton donor.

It belongs to the OMP decarboxylase family. Type 1 subfamily. As to quaternary structure, homodimer.

The catalysed reaction is orotidine 5'-phosphate + H(+) = UMP + CO2. It functions in the pathway pyrimidine metabolism; UMP biosynthesis via de novo pathway; UMP from orotate: step 2/2. In terms of biological role, catalyzes the decarboxylation of orotidine 5'-monophosphate (OMP) to uridine 5'-monophosphate (UMP). The chain is Orotidine 5'-phosphate decarboxylase from Aeropyrum pernix (strain ATCC 700893 / DSM 11879 / JCM 9820 / NBRC 100138 / K1).